Consider the following 361-residue polypeptide: Mannose-1-phosphate guanyltransferase 2 (361 aa).

Belongs to the transferase hexapeptide repeat family.

The protein resides in the cytoplasm. It catalyses the reaction alpha-D-mannose 1-phosphate + GTP + H(+) = GDP-alpha-D-mannose + diphosphate. It participates in nucleotide-sugar biosynthesis; GDP-alpha-D-mannose biosynthesis; GDP-alpha-D-mannose from alpha-D-mannose 1-phosphate (GTP route): step 1/1. Functionally, involved in cell wall synthesis where it is required for glycosylation. Involved in cell cycle progression through cell-size checkpoint. In Candida glabrata (strain ATCC 2001 / BCRC 20586 / JCM 3761 / NBRC 0622 / NRRL Y-65 / CBS 138) (Yeast), this protein is Mannose-1-phosphate guanyltransferase 2 (MPG1).